The primary structure comprises 101 residues: NADH-quinone oxidoreductase subunit K (101 aa).

The next 3 membrane-spanning stretches (helical) occupy residues 4–24, 29–49, and 61–81; these read LAHY…GIFL, IIII…NFVA, and IFVF…LAIL.

This sequence belongs to the complex I subunit 4L family. In terms of assembly, NDH-1 is composed of 14 different subunits. Subunits NuoA, H, J, K, L, M, N constitute the membrane sector of the complex.

It localises to the cell inner membrane. The catalysed reaction is a quinone + NADH + 5 H(+)(in) = a quinol + NAD(+) + 4 H(+)(out). In terms of biological role, NDH-1 shuttles electrons from NADH, via FMN and iron-sulfur (Fe-S) centers, to quinones in the respiratory chain. The immediate electron acceptor for the enzyme in this species is believed to be ubiquinone. Couples the redox reaction to proton translocation (for every two electrons transferred, four hydrogen ions are translocated across the cytoplasmic membrane), and thus conserves the redox energy in a proton gradient. This is NADH-quinone oxidoreductase subunit K from Burkholderia ambifaria (strain MC40-6).